Reading from the N-terminus, the 722-residue chain is Glycine--tRNA ligase beta subunit (722 aa).

It belongs to the class-II aminoacyl-tRNA synthetase family. Tetramer of two alpha and two beta subunits.

The protein resides in the cytoplasm. It carries out the reaction tRNA(Gly) + glycine + ATP = glycyl-tRNA(Gly) + AMP + diphosphate. This chain is Glycine--tRNA ligase beta subunit (glyS), found in Xylella fastidiosa (strain 9a5c).